The primary structure comprises 320 residues: GTP 3',8-cyclase (320 aa).

Residues Gln-5–Ala-225 form the Radical SAM core domain. Arg-14 is a GTP binding site. Positions 21 and 25 each coordinate [4Fe-4S] cluster. Tyr-27 serves as a coordination point for S-adenosyl-L-methionine. Residue Cys-28 participates in [4Fe-4S] cluster binding. Arg-64 lines the GTP pocket. Gly-68 contributes to the S-adenosyl-L-methionine binding site. Residue Thr-95 participates in GTP binding. Residue Ser-119 coordinates S-adenosyl-L-methionine. Lys-155 lines the GTP pocket. Residue Met-189 participates in S-adenosyl-L-methionine binding. [4Fe-4S] cluster contacts are provided by Cys-248 and Cys-251. Arg-253 to Arg-255 contacts GTP. Cys-265 is a binding site for [4Fe-4S] cluster.

The protein belongs to the radical SAM superfamily. MoaA family. In terms of assembly, monomer and homodimer. Requires [4Fe-4S] cluster as cofactor.

It carries out the reaction GTP + AH2 + S-adenosyl-L-methionine = (8S)-3',8-cyclo-7,8-dihydroguanosine 5'-triphosphate + 5'-deoxyadenosine + L-methionine + A + H(+). Its pathway is cofactor biosynthesis; molybdopterin biosynthesis. In terms of biological role, catalyzes the cyclization of GTP to (8S)-3',8-cyclo-7,8-dihydroguanosine 5'-triphosphate. The sequence is that of GTP 3',8-cyclase from Campylobacter jejuni (strain RM1221).